The chain runs to 615 residues: uncharacterized protein (615 aa).

Position 48 is a phosphoserine (Ser48). Residues 424–433 show a composition bias toward acidic residues; it reads DRENELEEGS. The tract at residues 424 to 615 is disordered; the sequence is DRENELEEGS…YARKKTKKNV (192 aa). Composition is skewed to basic and acidic residues over residues 439-476, 484-496, 504-521, and 529-561; these read DNEREVREKETEIDKEVAQGDNEREVGEKETEIDKEVG, DGNKDMELNKEVA, ESEKDKEVTESEKDKEVA, and ESEKDIEVADSEKDKEVPQDDEMDGGKVTEPSK. 2 stretches are compositionally biased toward basic residues: residues 579-589 and 606-615; these read KKPKVVKKVAK and YARKKTKKNV.

This is an uncharacterized protein from Arabidopsis thaliana (Mouse-ear cress).